Here is a 217-residue protein sequence, read N- to C-terminus: Probable transaldolase (217 aa).

The active-site Schiff-base intermediate with substrate is K83.

Belongs to the transaldolase family. Type 3B subfamily.

The protein resides in the cytoplasm. It carries out the reaction D-sedoheptulose 7-phosphate + D-glyceraldehyde 3-phosphate = D-erythrose 4-phosphate + beta-D-fructose 6-phosphate. The protein operates within carbohydrate degradation; pentose phosphate pathway; D-glyceraldehyde 3-phosphate and beta-D-fructose 6-phosphate from D-ribose 5-phosphate and D-xylulose 5-phosphate (non-oxidative stage): step 2/3. In terms of biological role, transaldolase is important for the balance of metabolites in the pentose-phosphate pathway. This Paracoccus denitrificans (strain Pd 1222) protein is Probable transaldolase.